Reading from the N-terminus, the 343-residue chain is L-ornithine/L-arginine 3-hydroxylase (343 aa).

Histidine 147 and glutamate 149 together coordinate Fe cation. Residues methionine 199–aspartate 215 show a composition bias toward polar residues. Residues methionine 199–lysine 218 form a disordered region. Fe cation is bound at residue histidine 302. Residue arginine 316 participates in 2-oxoglutarate binding.

It belongs to the clavaminate synthase family. Fe(2+) is required as a cofactor.

The enzyme catalyses L-ornithine + 2-oxoglutarate + O2 = (3S)-3-hydroxy-L-ornithine + succinate + CO2. It catalyses the reaction L-arginine + 2-oxoglutarate + O2 = (2S,3S)-hydroxyarginine + succinate + CO2. In terms of biological role, alpha-ketoglutarate-dependent dioxygenase that in vitro catalyzes the regio- and stereoselective hydroxylation of L-ornithine and L-arginine, leading to (3S)-3-hydroxy-L-ornithine and (3S)-3-hydroxy-L-arginine, respectively. Cannot use L-lysine, D-ornithine, or D-arginine as substrate. In Catenulispora acidiphila (strain DSM 44928 / JCM 14897 / NBRC 102108 / NRRL B-24433 / ID139908), this protein is L-ornithine/L-arginine 3-hydroxylase.